The primary structure comprises 505 residues: 2,3-bisphosphoglycerate-independent phosphoglycerate mutase (505 aa).

Mn(2+) contacts are provided by D11 and S61. S61 (phosphoserine intermediate) is an active-site residue. Substrate contacts are provided by residues H122, 152–153 (RD), R183, R189, 259–262 (RTDR), and K332. Positions 399, 403, 440, 441, and 458 each coordinate Mn(2+).

This sequence belongs to the BPG-independent phosphoglycerate mutase family. Monomer. Mn(2+) is required as a cofactor.

It carries out the reaction (2R)-2-phosphoglycerate = (2R)-3-phosphoglycerate. The protein operates within carbohydrate degradation; glycolysis; pyruvate from D-glyceraldehyde 3-phosphate: step 3/5. Functionally, catalyzes the interconversion of 2-phosphoglycerate and 3-phosphoglycerate. This Flavobacterium johnsoniae (strain ATCC 17061 / DSM 2064 / JCM 8514 / BCRC 14874 / CCUG 350202 / NBRC 14942 / NCIMB 11054 / UW101) (Cytophaga johnsonae) protein is 2,3-bisphosphoglycerate-independent phosphoglycerate mutase.